The sequence spans 480 residues: Sialyltransferase-like protein 5 (480 aa).

At 1-17 the chain is on the cytoplasmic side; sequence MARAPPPLSSLPPPPRR. The chain crosses the membrane as a signal-anchor for type II membrane protein span at residues 18 to 38; sequence PTVVLLLGLALAFCLAVLSIQ. Topologically, residues 39–480 are lumenal; that stretch reads SSFFTAPRLA…VCVRHERSSS (442 aa). N-linked (GlcNAc...) asparagine glycans are attached at residues asparagine 98, asparagine 130, asparagine 165, and asparagine 321.

Belongs to the glycosyltransferase 29 family.

The protein localises to the golgi apparatus membrane. Functionally, may possess sialyltransferase-like activity in vitro. This chain is Sialyltransferase-like protein 5, found in Oryza sativa subsp. japonica (Rice).